The following is a 255-amino-acid chain: uncharacterized protein (255 aa).

2 helical membrane-spanning segments follow: residues 99–119 (ISLIYLLTVGMLINVCVITSF) and 146–166 (YIGSAFITPALYFTLTLILFL).

It is found in the mitochondrion membrane. This is an uncharacterized protein from Schizosaccharomyces pombe (strain 972 / ATCC 24843) (Fission yeast).